Here is a 635-residue protein sequence, read N- to C-terminus: Ligand-gated ion channel 4 (635 aa).

The signal sequence occupies residues 1 to 24; the sequence is MIICYSCLTVSILLTIKFVPCRFA. At 25 to 324 the chain is on the extracellular side; sequence GIEHQNTKSR…IHMHRRPLFY (300 aa). Asn-46, Asn-139, Asn-177, and Asn-225 each carry an N-linked (GlcNAc...) asparagine glycan. Cys-238 and Cys-252 are disulfide-bonded. An N-linked (GlcNAc...) asparagine glycan is attached at Asn-282. Transmembrane regions (helical) follow at residues 325-345, 355-375, and 381-401; these read VFNH…GFLM, MIIT…ESIP, and VPLI…ATCV. Residues 402 to 599 lie on the Cytoplasmic side of the membrane; sequence NVITLNMHRN…QQLASVVDRL (198 aa). Residues 600 to 620 form a helical membrane-spanning segment; the sequence is LLCLFCTATLFTIICLLIVPV. An N-linked (GlcNAc...) asparagine glycan is attached at Asn-625.

This sequence belongs to the ligand-gated ion channel (TC 1.A.9) family.

The protein resides in the postsynaptic cell membrane. Its subcellular location is the cell membrane. Its function is as follows. Possible acetylcholine receptor. The polypeptide is Ligand-gated ion channel 4 (lgc-4) (Caenorhabditis elegans).